A 159-amino-acid polypeptide reads, in one-letter code: Transcription antitermination protein NusB (159 aa).

It belongs to the NusB family.

Its function is as follows. Involved in transcription antitermination. Required for transcription of ribosomal RNA (rRNA) genes. Binds specifically to the boxA antiterminator sequence of the ribosomal RNA (rrn) operons. In Xanthomonas campestris pv. campestris (strain 8004), this protein is Transcription antitermination protein NusB.